The following is a 711-amino-acid chain: DNA topoisomerase 3 (711 aa).

Positions 2 to 135 (KSLILAEKPS…IKRLWISSVT (134 aa)) constitute a Toprim domain. Residues glutamate 8 and aspartate 104 each contribute to the Mg(2+) site. In terms of domain architecture, Topo IA-type catalytic spans 152–580 (FQHLYEAALA…EMKAFTQSIV (429 aa)). An interaction with DNA region spans residues 186 to 191 (SLGRVQ). The O-(5'-phospho-DNA)-tyrosine intermediate role is filled by tyrosine 305. The segment at 672-699 (KRFKNKSSGKVSKKEMKKYMNNEDSLEN) is disordered. The segment covering 683–692 (SKKEMKKYMN) has biased composition (basic and acidic residues).

The protein belongs to the type IA topoisomerase family. Mg(2+) serves as cofactor.

The enzyme catalyses ATP-independent breakage of single-stranded DNA, followed by passage and rejoining.. Its function is as follows. Releases the supercoiling and torsional tension of DNA, which is introduced during the DNA replication and transcription, by transiently cleaving and rejoining one strand of the DNA duplex. Introduces a single-strand break via transesterification at a target site in duplex DNA. The scissile phosphodiester is attacked by the catalytic tyrosine of the enzyme, resulting in the formation of a DNA-(5'-phosphotyrosyl)-enzyme intermediate and the expulsion of a 3'-OH DNA strand. The free DNA strand then undergoes passage around the unbroken strand, thus removing DNA supercoils. Finally, in the religation step, the DNA 3'-OH attacks the covalent intermediate to expel the active-site tyrosine and restore the DNA phosphodiester backbone. The chain is DNA topoisomerase 3 from Staphylococcus haemolyticus (strain JCSC1435).